The following is a 464-amino-acid chain: Glutamate--tRNA ligase (464 aa).

The 'HIGH' region signature appears at 9 to 19; sequence PSPTGYLHIGG. Positions 242-246 match the 'KMSKS' region motif; the sequence is KISKR. ATP is bound at residue Lys245.

It belongs to the class-I aminoacyl-tRNA synthetase family. Glutamate--tRNA ligase type 1 subfamily. Monomer.

The protein localises to the cytoplasm. The enzyme catalyses tRNA(Glu) + L-glutamate + ATP = L-glutamyl-tRNA(Glu) + AMP + diphosphate. Its function is as follows. Catalyzes the attachment of glutamate to tRNA(Glu) in a two-step reaction: glutamate is first activated by ATP to form Glu-AMP and then transferred to the acceptor end of tRNA(Glu). In Neisseria meningitidis serogroup C / serotype 2a (strain ATCC 700532 / DSM 15464 / FAM18), this protein is Glutamate--tRNA ligase.